The chain runs to 193 residues: Protein D5 (193 aa).

Repression of replication initiation (possible). In Dictyostelium discoideum (Social amoeba), this protein is Protein D5 (ddpE).